The chain runs to 326 residues: D-alanine--D-alanine ligase (326 aa).

The ATP-grasp domain occupies 121 to 320 (ISVLRPYGIK…LKDLFGSTIE (200 aa)). ATP is bound at residue 149–204 (VDKVGLPCFVKANRAGSSFGVTKVKTEDEIISAAKTAFTEDDEAIIESFLDGTEVS). The Mg(2+) site is built by Glu275, Glu287, and Asn289.

The protein belongs to the D-alanine--D-alanine ligase family. It depends on Mg(2+) as a cofactor. Requires Mn(2+) as cofactor.

It is found in the cytoplasm. It carries out the reaction 2 D-alanine + ATP = D-alanyl-D-alanine + ADP + phosphate + H(+). It functions in the pathway cell wall biogenesis; peptidoglycan biosynthesis. Cell wall formation. The sequence is that of D-alanine--D-alanine ligase from Christiangramia forsetii (strain DSM 17595 / CGMCC 1.15422 / KT0803) (Gramella forsetii).